The primary structure comprises 390 residues: Protein dimmed (390 aa).

Residues 24-163 form a disordered region; it reads HNNNNYNTDG…RNMRRLESNE (140 aa). 2 stretches are compositionally biased toward polar residues: residues 29-44 and 55-64; these read YNTD…SAEG and RTSQLSNNTY. Asparagine 61 carries an N-linked (GlcNAc...) asparagine glycan. Low complexity predominate over residues 69–78; it reads TDSSSQSDDT. Over residues 79-90 the composition is skewed to gly residues; sequence SGGGGSSNGGGS. The span at 122–141 shows a compositional bias: low complexity; the sequence is PSTIAPNSTSSNSSNANGNA. Asparagine 128, asparagine 133, and asparagine 140 each carry an N-linked (GlcNAc...) asparagine glycan. Over residues 151 to 163 the composition is skewed to basic and acidic residues; that stretch reads AKERNMRRLESNE. The bHLH domain occupies 156-208; that stretch reads MRRLESNERERMRMHSLNDAFQSLREVIPHVEMERRLSKIETLTLAKNYIINL. Residues asparagine 207 and asparagine 237 are each glycosylated (N-linked (GlcNAc...) asparagine). The interval 312–339 is disordered; sequence QQQQASHLPHHQQAMHGHGHLGASIQSQ. Residue asparagine 347 is glycosylated (N-linked (GlcNAc...) asparagine).

Forms homodimers via the bHLH domain. These dimers bind the core E-box sequence. Detected in the developing nervous system in the bilateral domains in the cephalic region that later on forms part of the ring gland. Concomitantly expressed in the larval central nervous system (CNS), including the dorsal chain neurons as well as several bilateral clusters of neurons: large, midline protocerebral brain cells (MC), lateral protocerebral brain cells (LC), ventral subesophageal neurons (SE) and lateral abdominal neurons, and the transverse nerves. Outside the CNS, detected in at least three classes of endocrine cells: intrinsic cells of the corpora cardiaca, midgut cells, the Inka cells, lateral Bipolar neurons associated with the segmental transverse nerve, and several peptidergic cells of the enteric nervous system. Expressed only in central and peripheral neuroendocrine secretory cells and neurosecretory neurons but not in sensory or motor neurons.

It localises to the cytoplasm. Functionally, transcription factor that regulates neurosecretory (NS) cell function and neuroendocrine cell fate. Acts as a master regulator of common NS functions such as Phm expression and neuropeptide production. Plays a role as a regulator of peptide-containing large dense-core vesicle (LDCV) production and peptidergic cell differentiation. Controls transcription of FMRFamide in Tv neuronal cells and Fur1 in Ap-let cells (Tvb and dorsal apterous cells). Also required for up-regulation of Phm in Tv and Ap-let cells, and expression of three neuropeptide genes, Ms, FMRFamide and Lk. Influences both regulated and constitutive secretory activity in neuroendocrine cells at embryonic and postembryonic level. Loss of function studies show reduced cellular levels of various neuropeptides and neuropeptide biosynthetic enzymes. The polypeptide is Protein dimmed (dimm) (Drosophila melanogaster (Fruit fly)).